Consider the following 48-residue polypeptide: Cathepsin B (48 aa).

It belongs to the peptidase C1 family. In terms of assembly, dimer of a heavy chain and a light chain cross-linked by a disulfide bond.

The protein localises to the lysosome. The enzyme catalyses Hydrolysis of proteins with broad specificity for peptide bonds. Preferentially cleaves -Arg-Arg-|-Xaa bonds in small molecule substrates (thus differing from cathepsin L). In addition to being an endopeptidase, shows peptidyl-dipeptidase activity, liberating C-terminal dipeptides.. Thiol protease which is believed to participate in intracellular degradation and turnover of proteins. Has also been implicated in tumor invasion and metastasis. In Coturnix japonica (Japanese quail), this protein is Cathepsin B (CTSB).